A 290-amino-acid polypeptide reads, in one-letter code: Probable prolyl 4-hydroxylase 8 (290 aa).

Over 1–19 the chain is Cytoplasmic; it reads MAKKPKQLRNKPRKSFSTQ. Residues 20 to 40 traverse the membrane as a helical; Signal-anchor for type II membrane protein segment; that stretch reads TFTVVVLVLFVILILVGLGIF. Residues 41–290 lie on the Lumenal side of the membrane; the sequence is SLPSTNKTSS…TKWFHVHEYN (250 aa). An N-linked (GlcNAc...) asparagine glycan is attached at Asn-46. Residues 163 to 286 enclose the Fe2OG dioxygenase domain; it reads NGEGLQVLHY…KWSSTKWFHV (124 aa). Fe cation is bound by residues His-181 and Asp-183. Residue Asn-222 is glycosylated (N-linked (GlcNAc...) asparagine). Residue His-267 participates in Fe cation binding. Position 277 (Lys-277) interacts with 2-oxoglutarate.

This sequence belongs to the P4HA family. Fe(2+) is required as a cofactor. L-ascorbate serves as cofactor.

Its subcellular location is the endoplasmic reticulum membrane. The enzyme catalyses L-prolyl-[collagen] + 2-oxoglutarate + O2 = trans-4-hydroxy-L-prolyl-[collagen] + succinate + CO2. Its function is as follows. Catalyzes the post-translational formation of 4-hydroxyproline in -Xaa-Pro-Gly- sequences in proline-rich peptide sequences of plant glycoproteins and other proteins. Hydroxyprolines are important constituent of many plant cell wall glycoproteins such as extensins, hydroxyproline-rich glycoproteins, lectins and arabinogalactan proteins. The protein is Probable prolyl 4-hydroxylase 8 of Arabidopsis thaliana (Mouse-ear cress).